A 921-amino-acid polypeptide reads, in one-letter code: MDKTYSPEAIEKALYKKWESHHYFQPRGEGKRFCIMLPPPNVTGSLHMGHGFQHTIMDALTRYHRMLGDKTLWQPGTDHAGISTQLVVERQLEAQGVSRKELTREQFLDKVWQWKEESGNTITQQMRRLGASVDWSRERFTMDEGLSAAVQKVFVQLYEEGLIYRGTRLVNWDPKLGTAVSDLEVLSEEEDGFLWHIRYPVVDSEEFLIVATTRPETLLGDCAVAVHPDDSRFRHLIGKQVHLPLCDRTIPVIADDYVDKEFGSGCVKITPAHDFNDHEVGKRHQLPQINILTKKGTINKNAPLKYQGMDRFLAREQIIKDLEQEGLLAKTEPHKLKVPRGEKSNVIIEPLLTDQWYVKTKPLAEPAIAAVKKGDIRFIPETWDKTYFQWMDNIEDWCISRQLWWGHRIPAWYDNHGNIYVGYSENDVRFKHKIDQSTPLKQDEDVLDTWFSSALWPFSTLGWPERTPELEQFYPTSVLVTGFDIIFFWVARMIMMGLKFTGKIPFKEVFITGLIRDSEGHKMSKSKGNVLDPLDIVDGIELDSLIAKRTSNLMLNSVRDRITKATRKEFPEGISAYGTDALRFTYCSLASTGRNVRFDLGRVEGYRNFCNKLWNAARYVLLNTDEEQIDFGDGAFQYSPADQWILSRLQNTVSKVHHYFETYRFDLLANTLYEFVWHEYCDWYLELSKPILQDDQALSAMKRGTRRTLIHVLDQILKLLHPLMPFITEEIWQKTTKFTSENGISIMLSTYPKVNEEFINPSIEEELDWLKSAIQSLRTIRSEMSISPAKLIPLYIRNITPELKERIAKYEKILKTLSKIDKINYLAPDEKVPVSATAVLGEIELLIPMADLIDKEAELSRLNKELAKLNKDIELAQGKLNNPKFTDKAPEEIIAKEKDKLAQAQLAKDKLLQHKNRIESL.

The 'HIGH' region motif lies at 40–50; it reads PNVTGSLHMGH. Positions 522-526 match the 'KMSKS' region motif; sequence KMSKS. Residue Lys-525 coordinates ATP. Residues 849 to 921 adopt a coiled-coil conformation; it reads MADLIDKEAE…LQHKNRIESL (73 aa).

This sequence belongs to the class-I aminoacyl-tRNA synthetase family. ValS type 1 subfamily. As to quaternary structure, monomer.

Its subcellular location is the cytoplasm. It carries out the reaction tRNA(Val) + L-valine + ATP = L-valyl-tRNA(Val) + AMP + diphosphate. Functionally, catalyzes the attachment of valine to tRNA(Val). As ValRS can inadvertently accommodate and process structurally similar amino acids such as threonine, to avoid such errors, it has a 'posttransfer' editing activity that hydrolyzes mischarged Thr-tRNA(Val) in a tRNA-dependent manner. In Legionella pneumophila (strain Lens), this protein is Valine--tRNA ligase.